Reading from the N-terminus, the 1114-residue chain is Extracellular sulfatase SULF-1 homolog (1114 aa).

Positions 1–25 (MMRHSSLRLIIGGLILLLFVLNVFS) are cleaved as a signal peptide. Residues Asp62, Asp63, and Cys98 each coordinate Ca(2+). Residue Cys98 is the Nucleophile of the active site. Cys98 carries the 3-oxoalanine (Cys) modification. N-linked (GlcNAc...) asparagine glycans are attached at residues Asn122, Asn159, Asn181, Asn208, and Asn251. 2 residues coordinate Ca(2+): Asp327 and His328. N-linked (GlcNAc...) asparagine glycosylation is present at Asn447. Residues 466 to 479 (SSSSTAATLMSSTA) show a composition bias toward low complexity. The disordered stretch occupies residues 466 to 504 (SSSSTAATLMSSTAQQPEDGEEEVETDNEEDDVDGDGAM). The span at 483-502 (EDGEEEVETDNEEDDVDGDG) shows a compositional bias: acidic residues. N-linked (GlcNAc...) asparagine glycans are attached at residues Asn683, Asn713, and Asn743. The segment at 781-812 (KQLRESNKQALAAGRRNDNRRRNDQSVLDSGA) is disordered. Residues 795–804 (RRNDNRRRND) show a composition bias toward basic and acidic residues. A glycan (N-linked (GlcNAc...) asparagine) is linked at Asn817. The span at 876–895 (ADSKEMAREARRKLKEERQR) shows a compositional bias: basic and acidic residues. The segment at 876 to 901 (ADSKEMAREARRKLKEERQRKKERKR) is disordered. N-linked (GlcNAc...) asparagine glycans are attached at residues Asn945, Asn955, and Asn974. The segment at 1073 to 1114 (LSKYNRLTGSQQSHMKRRPWKQTPLQQSPRFLRTHSVTPAQA) is disordered. Positions 1095 to 1114 (TPLQQSPRFLRTHSVTPAQA) are enriched in polar residues.

It belongs to the sulfatase family. It depends on Ca(2+) as a cofactor. Post-translationally, the conversion to 3-oxoalanine (also known as C-formylglycine, FGly), of a serine or cysteine residue in prokaryotes and of a cysteine residue in eukaryotes, is critical for catalytic activity.

It is found in the endoplasmic reticulum. Its subcellular location is the golgi apparatus. The protein resides in the golgi stack. It localises to the cell surface. This is Extracellular sulfatase SULF-1 homolog (Sulf1) from Drosophila melanogaster (Fruit fly).